Here is a 236-residue protein sequence, read N- to C-terminus: Small ribosomal subunit protein uS3 (236 aa).

Positions 39–107 (VRHFLMQKLS…PTQLNIAEVR (69 aa)) constitute a KH type-2 domain.

It belongs to the universal ribosomal protein uS3 family. As to quaternary structure, part of the 30S ribosomal subunit. Forms a tight complex with proteins S10 and S14.

Its function is as follows. Binds the lower part of the 30S subunit head. Binds mRNA in the 70S ribosome, positioning it for translation. In Blochmanniella pennsylvanica (strain BPEN), this protein is Small ribosomal subunit protein uS3.